The following is a 1083-amino-acid chain: MSQTQDYECRSHNVDLPESRIPGSNTRLEWVEIIEPRTRERMYANLVTGECVWDPPAGVRIKRTSENQWWELFDPNTSRFYYYNASTQRTVWHRPQGCDIIPLAKLQTLKQNTESPRASAESSPGRGSSVSREGSTSSSLEPEPDTEKAQELPARAGRPAAFGTVKEDSGSSSPPGVFLEKDYEIYRDYSADGQLLHYRTSSLRWNSGAKERMLIKVADREPSFLAAQGNGYAPDGPPGVRSRRPSGSQHSPSLQTFAPEADGTIFFPERRPSPFLKRAELPGSSSPLLAQPRKPSGDSQPSSPRYGYEPPLYEEPPVEYQAPIYDEPPMDVQFEAGGGYQAGSPQRSPGRKPRPFLQPNKQGPPSPCQQLVLTKQKCPERFLSLEYSPAGKEYVRQLVYVEQAGSSPKLRAGPRHKYAPNPGGGSYSLQPSPCLLRDQRLGVKSGDYSTMEGPELRHSQPPTPLPQAQEDAMSWSSQQDTLSSTGYSPGTRKRKSRKPSLCQATSATPTEGPGDLLVEQPLAEEQPPCGTSLAPVKRAEGEAEGARGAAEPFLAQARLAWEAQQAHFHMKQRSSWDSQQDGSGYESDGALPLPMPGPVVRAFSEDEALAQQENRHWRRGTFEKLGFPQILLEKSVSVQTNLASPEPYLHPSQSEDLAACAQFESSRQSRSGVPSSSCVFPTFTLRKPSSETDIENWASKHFNKHTQGLFRRKVSIANMLAWSSESIKKPMIVTSDRHVKKEACELFKLIQMYMGDRRAKADPLHVALEVATKGWSVQGLRDELYIQLCRQTTENFRLESLARGWELMAICLAFFPPTPKFHSYLEGYIYRHMDPVNDTKGVAISTYAKYCYHKLQKAALTGAKKGLKKPNVEEIRHAKNAVFSPSMFGSALQEVMGMQRERYPERQLPWVQTRLSEEVLALNGDQTEGIFRVPGDIDEVNALKLQVDQWKVPTGLEDPHVPASLLKLWYRELEEPLIPHEFYEQCIAHYDSPEAAVAVVHALPRINRMVLCYLIRFLQVFVQPANVAVTKMDVSNLAMVMAPNCLRCQSDDPRVIFENTRKEMSFLRVLIQHLDTSFMEGVL.

An N-acetylserine modification is found at S2. 2 WW domains span residues 25–58 (NTRL…PPAG) and 63–97 (RTSE…RPQG). The segment at 110 to 154 (KQNTESPRASAESSPGRGSSVSREGSTSSSLEPEPDTEKAQELPA) is disordered. The segment covering 117 to 141 (RASAESSPGRGSSVSREGSTSSSLE) has biased composition (low complexity). S169 is modified (phosphoserine). The segment at 226–369 (AAQGNGYAPD…NKQGPPSPCQ (144 aa)) is disordered. The segment covering 245-256 (PSGSQHSPSLQT) has biased composition (polar residues). Positions 268–280 (PERRPSPFLKRAE) are enriched in basic and acidic residues. Residues S286, S384, S388, S406, and S407 each carry the phosphoserine modification. Disordered stretches follow at residues 405 to 545 (GSSP…EAEG) and 570 to 599 (MKQR…PGPV). Polar residues-rich tracts occupy residues 474–488 (SWSS…TGYS) and 573–582 (RSSWDSQQDG). Residues S604, S690, S715, and S726 each carry the phosphoserine modification. The 158-residue stretch at 722-879 (WSSESIKKPM…PNVEEIRHAK (158 aa)) folds into the MyTH4 domain. The Rho-GAP domain occupies 890 to 1078 (SALQEVMGMQ…VLIQHLDTSF (189 aa)).

It is found in the nucleus. The polypeptide is Rho GTPase-activating protein 39 (ARHGAP39) (Homo sapiens (Human)).